The primary structure comprises 166 residues: Interferon gamma (166 aa).

The signal sequence occupies residues 1–23 (MKYTSYILAFQLCIILGSSSCYS). Gln24 carries the post-translational modification Pyrrolidone carboxylic acid. Residues Asn39, Asn44, and Asn106 are each glycosylated (N-linked (GlcNAc...) asparagine).

It belongs to the type II (or gamma) interferon family. Homodimer. In terms of tissue distribution, released primarily from activated T lymphocytes.

It localises to the secreted. Produced by lymphocytes activated by specific antigens or mitogens. IFN-gamma, in addition to having antiviral activity, has important immunoregulatory functions. It is a potent activator of macrophages, it has antiproliferative effects on transformed cells and it can potentiate the antiviral and antitumor effects of the type I interferons. The polypeptide is Interferon gamma (IFNG) (Marmota monax (Woodchuck)).